Consider the following 387-residue polypeptide: Mannose-6-phosphate isomerase (387 aa).

Belongs to the N-acylglucosamine 2-epimerase family.

It catalyses the reaction D-mannose 6-phosphate = D-fructose 6-phosphate. The protein is Mannose-6-phosphate isomerase (pmi) of Rhizobium meliloti (strain 1021) (Ensifer meliloti).